A 115-amino-acid polypeptide reads, in one-letter code: MSKMRAERVGEQMKKELMDIINNKVKDPRIGFITITDVQVTNDLSLAKVYLTVLGNEKEVDDTFKALEKAKGFIKSELGSRMRLRIVPELQFEYDHSIEYGNKIEKMIQDLHKKD.

It belongs to the RbfA family. In terms of assembly, monomer. Binds 30S ribosomal subunits, but not 50S ribosomal subunits or 70S ribosomes.

Its subcellular location is the cytoplasm. In terms of biological role, one of several proteins that assist in the late maturation steps of the functional core of the 30S ribosomal subunit. Associates with free 30S ribosomal subunits (but not with 30S subunits that are part of 70S ribosomes or polysomes). Required for efficient processing of 16S rRNA. May interact with the 5'-terminal helix region of 16S rRNA. The polypeptide is Ribosome-binding factor A (Staphylococcus carnosus (strain TM300)).